The sequence spans 414 residues: Putative dipeptidase TRV_05564 (414 aa).

The first 20 residues, Met-1–Ala-20, serve as a signal peptide directing secretion. Positions 45, 47, and 157 each coordinate Zn(2+). The cysteines at positions 96 and 186 are disulfide-linked. His-184 serves as a coordination point for substrate. Zn(2+)-binding residues include His-228 and His-249. Residues Arg-260 and Asp-320 each coordinate substrate. N-linked (GlcNAc...) asparagine glycosylation occurs at Asn-392.

Belongs to the metallo-dependent hydrolases superfamily. Peptidase M19 family. Zn(2+) is required as a cofactor.

It carries out the reaction an L-aminoacyl-L-amino acid + H2O = 2 an L-alpha-amino acid. Hydrolyzes a wide range of dipeptides. The chain is Putative dipeptidase TRV_05564 from Trichophyton verrucosum (strain HKI 0517).